The following is a 115-amino-acid chain: Galanin-like peptide (115 aa).

An N-terminal signal peptide occupies residues 1–23; sequence MAPSVPLVLLLVLLLSLAETPAS. Positions 86-115 are excised as a propeptide; sequence NVMEAFAKPEIGDLDVLSKKIPKEEDVLKS.

The protein belongs to the galanin family. In terms of tissue distribution, hypothalamus and pituitary gland.

The protein localises to the secreted. In terms of biological role, hypothalamic neuropeptide which binds to the G-protein-coupled galanin receptors (GALR1, GALR2 and GALR3). Involved in a large number of putative physiological functions in CNS homeostatic processes, including the regulation of gonadotropin-releasing hormone secretion. Exhibits potent and dose-dependent vasoconstrictor and anti-edema activity in the cutaneous microvasculature, a physiologic effects which does not appear to be mediated via GALR1 or GALR2. Exhibits antimicrobial activity against Gram-negative bacterias, inducing bacterial membrane blebbing. In Macaca nemestrina (Pig-tailed macaque), this protein is Galanin-like peptide (GALP).